The sequence spans 59 residues: Large ribosomal subunit protein bL32 (59 aa).

This sequence belongs to the bacterial ribosomal protein bL32 family.

This is Large ribosomal subunit protein bL32 from Rhizorhabdus wittichii (strain DSM 6014 / CCUG 31198 / JCM 15750 / NBRC 105917 / EY 4224 / RW1) (Sphingomonas wittichii).